A 429-amino-acid polypeptide reads, in one-letter code: C4-dicarboxylate transport protein (429 aa).

The next 8 membrane-spanning stretches (helical) occupy residues 9-29 (VLYV…HYYP), 45-65 (LIKM…IAGM), 79-99 (LLYF…ATHI), 149-169 (GEIL…AHLG), 185-205 (VLFG…FGAM), 223-243 (LIGT…GTIA), 308-328 (IYMT…LTWM), and 356-376 (AATL…ILGI).

This sequence belongs to the dicarboxylate/amino acid:cation symporter (DAACS) (TC 2.A.23) family.

Its subcellular location is the cell inner membrane. Functionally, responsible for the transport of dicarboxylates such as succinate, fumarate, and malate from the periplasm across the membrane. The sequence is that of C4-dicarboxylate transport protein from Burkholderia lata (strain ATCC 17760 / DSM 23089 / LMG 22485 / NCIMB 9086 / R18194 / 383).